A 61-amino-acid polypeptide reads, in one-letter code: Type IV secretion system protein PtlI homolog (61 aa).

Positions 1 to 25 (MIHAHSNARLLRWAILAIAPVTLGA) are cleaved as a signal peptide. Positions 37-61 (PDGKPLIPINTAAPEQGSSCQTRAP) are disordered. Residues 52-61 (QGSSCQTRAP) are compositionally biased toward polar residues.

The chain is Type IV secretion system protein PtlI homolog (ptlI) from Bordetella parapertussis (strain 12822 / ATCC BAA-587 / NCTC 13253).